The sequence spans 272 residues: Cyclase-like protein 2 (272 aa).

A signal peptide spans 1–24 (MAVPPLFFLLTLLSLPSLLISAGA).

Belongs to the Cyclase 1 superfamily.

The protein localises to the secreted. It is found in the extracellular space. The protein resides in the extracellular matrix. In terms of biological role, may function redundantly with CYCLASE1 for normal plant growth, development and viability. This Arabidopsis thaliana (Mouse-ear cress) protein is Cyclase-like protein 2.